We begin with the raw amino-acid sequence, 434 residues long: MFIDRAKIYVKAGDGGNGCIAFRREKFVPKGGPAGGDGGKGGDVIIEADENLDTLLDFHYKRHYYAERGEHGKGKNQKGKDGKDLVIKVPVGTLIFDVETGELLADLVSHGQRVVVAKGGKGGRGNAHFATSTRQTPYFAEKGEKGEERWLYLELKLLADVGLLGLPNAGKSTLLSRISNATPEIAPYPFTTKTPNLGVVEREDITFTVADIPGLIEGAHENKGMGDEFLRHIERTSVLVFVLDAADMVNPPQRAYEILKKELYLYSPKLLEKPRIIAINKIDLPEAQERIPEIEEWLKNEGVPYVFISAKEGINIDKLLELMEKYVKEKKESIPVVEIEKEIEELKQENKKQEIPEIIKEGDLWILKDKKTESLANKLDLYNPQAFSYFLNYAKRRGIIKLINRAKIKDDEEIKIGNYVFKYNSKNNSLELIE.

In terms of domain architecture, Obg spans 1–158 (MFIDRAKIYV…RWLYLELKLL (158 aa)). Positions 159–328 (ADVGLLGLPN…LLELMEKYVK (170 aa)) constitute an OBG-type G domain. GTP contacts are provided by residues 165 to 172 (GLPNAGKS), 190 to 194 (FTTKT), 211 to 214 (DIPG), 280 to 283 (NKID), and 309 to 311 (SAK). Mg(2+) is bound by residues Ser172 and Thr192. The OCT domain occupies 347–425 (KQENKKQEIP…IGNYVFKYNS (79 aa)).

The protein belongs to the TRAFAC class OBG-HflX-like GTPase superfamily. OBG GTPase family. As to quaternary structure, monomer. Requires Mg(2+) as cofactor.

The protein localises to the cytoplasm. An essential GTPase which binds GTP, GDP and possibly (p)ppGpp with moderate affinity, with high nucleotide exchange rates and a fairly low GTP hydrolysis rate. Plays a role in control of the cell cycle, stress response, ribosome biogenesis and in those bacteria that undergo differentiation, in morphogenesis control. This Dictyoglomus turgidum (strain DSM 6724 / Z-1310) protein is GTPase Obg.